The primary structure comprises 165 residues: Anaphase-promoting complex subunit 11 (165 aa).

The RING-type; atypical zinc-finger motif lies at 52-95 (CPSCKFPGDQCPLVIGLCHHNFHDHCIYRWLDTPTSKGLCPMCR).

The APC/C is composed of at least 13 subunits that stay tightly associated throughout the cell cycle: APC1, APC2, APC4, APC5, APC9, APC11, CDC16, CDC23, CDC26, CDC27, DOC1, MND2 and SWM1.

It functions in the pathway protein modification; protein ubiquitination. Its function is as follows. Probably catalytic subunit of the anaphase promoting complex/cyclosome (APC/C), a cell cycle-regulated E3 ubiquitin-protein ligase complex that controls progression through mitosis and the G1 phase of the cell cycle. The APC/C is thought to confer substrate specificity and, in the presence of ubiquitin-conjugating E2 enzymes, it catalyzes the formation of protein-ubiquitin conjugates that are subsequently degraded by the 26S proteasome. In early mitosis, the APC/C is activated by CDC20 and targets securin PDS1, the B-type cyclin CLB5, and other anaphase inhibitory proteins for proteolysis, thereby triggering the separation of sister chromatids at the metaphase-to-anaphase transition. In late mitosis and in G1, degradation of CLB5 allows activation of the APC/C by CDH1, which is needed to destroy CDC20 and the B-type cyclin CLB2 to allow exit from mitosis and creating the low CDK state necessary for cytokinesis and for reforming prereplicative complexes in G1 prior to another round of replication. APC11 is required to recruit the ubiquitin-conjugating enzyme E2 to the APC/C. The chain is Anaphase-promoting complex subunit 11 (APC11) from Saccharomyces cerevisiae (strain ATCC 204508 / S288c) (Baker's yeast).